Reading from the N-terminus, the 350-residue chain is Biotin synthase (350 aa).

In terms of domain architecture, Radical SAM core spans 54 to 278 (REIQLSTLLS…TMPQSYVRLS (225 aa)). The [4Fe-4S] cluster site is built by Cys69, Cys73, and Cys76. 4 residues coordinate [2Fe-2S] cluster: Cys113, Cys144, Cys204, and Arg276.

The protein belongs to the radical SAM superfamily. Biotin synthase family. Homodimer. It depends on [4Fe-4S] cluster as a cofactor. [2Fe-2S] cluster is required as a cofactor.

The enzyme catalyses (4R,5S)-dethiobiotin + (sulfur carrier)-SH + 2 reduced [2Fe-2S]-[ferredoxin] + 2 S-adenosyl-L-methionine = (sulfur carrier)-H + biotin + 2 5'-deoxyadenosine + 2 L-methionine + 2 oxidized [2Fe-2S]-[ferredoxin]. The protein operates within cofactor biosynthesis; biotin biosynthesis; biotin from 7,8-diaminononanoate: step 2/2. Catalyzes the conversion of dethiobiotin (DTB) to biotin by the insertion of a sulfur atom into dethiobiotin via a radical-based mechanism. The protein is Biotin synthase of Neisseria meningitidis serogroup C / serotype 2a (strain ATCC 700532 / DSM 15464 / FAM18).